The chain runs to 84 residues: Subtilisin-chymotrypsin inhibitor-2A (84 aa).

The tract at residues 1–23 is disordered; sequence MSSVEKKPEGVNTGAGDRHNLKT.

It belongs to the protease inhibitor I13 (potato type I serine protease inhibitor) family.

Functionally, inhibits both subtilisin and chymotrypsin. The chain is Subtilisin-chymotrypsin inhibitor-2A from Hordeum vulgare (Barley).